The sequence spans 138 residues: Large ribosomal subunit protein uL14 (138 aa).

It belongs to the universal ribosomal protein uL14 family. Part of the 50S ribosomal subunit. Forms a cluster with proteins L3 and L24e, part of which may contact the 16S rRNA in 2 intersubunit bridges.

Binds to 23S rRNA. Forms part of two intersubunit bridges in the 70S ribosome. The sequence is that of Large ribosomal subunit protein uL14 from Metallosphaera sedula (strain ATCC 51363 / DSM 5348 / JCM 9185 / NBRC 15509 / TH2).